A 234-amino-acid chain; its full sequence is Transcriptional activator protein TraR (234 aa).

The 66-residue stretch at 167 to 232 (TAEDAAWLDP…HLTALAIRRK (66 aa)) folds into the HTH luxR-type domain. A DNA-binding region (H-T-H motif) is located at residues 191–210 (MEEIADVEGVKYNSVRVKLR).

The protein belongs to the autoinducer-regulated transcriptional regulatory protein family.

Positive regulation of conjugal transfer of Ti plasmids. TraR activates target genes in the presence of AAI and also activates traR and traI themselves. The chain is Transcriptional activator protein TraR (traR) from Rhizobium radiobacter (Agrobacterium tumefaciens).